A 530-amino-acid polypeptide reads, in one-letter code: 6-phosphofructo-2-kinase/fructose-2,6-bisphosphatase 2 (530 aa).

Positions 1 to 15 are enriched in polar residues; that stretch reads MSGASSSEQNNNSYE. The tract at residues 1-21 is disordered; it reads MSGASSSEQNNNSYETKPPNL. Ser-2 carries the N-acetylserine modification. The tract at residues 2–248 is 6-phosphofructo-2-kinase; sequence SGASSSEQNN…VYYLMNIHVQ (247 aa). Residue Ser-29 is modified to Phosphoserine; by PKA. Residue 45-53 participates in ATP binding; it reads GLPARGKTY. Beta-D-fructose 6-phosphate-binding residues include Arg-78 and Arg-102. The active site involves Asp-128. Beta-D-fructose 6-phosphate is bound by residues Thr-130 and Arg-136. Residue Cys-158 is part of the active site. 167 to 172 serves as a coordination point for ATP; the sequence is NILEVK. Residues Lys-172, Arg-193, and Tyr-197 each contribute to the beta-D-fructose 6-phosphate site. The interval 249–530 is fructose-2,6-bisphosphatase; it reads PRTIYLCRHG…PPALASCPCH (282 aa). Arg-256 serves as a coordination point for beta-D-fructose 2,6-bisphosphate. The active-site Tele-phosphohistidine intermediate is the His-257. Gly-269 is a beta-D-fructose 2,6-bisphosphate binding site. Glu-326 functions as the Proton donor/acceptor in the catalytic mechanism. Beta-D-fructose 2,6-bisphosphate is bound by residues Tyr-337, Arg-351, Lys-355, Tyr-366, Gln-392, and Arg-396. 348–351 provides a ligand contact to ATP; sequence FALR. ATP contacts are provided by residues 392–396 and Tyr-428; that span reads QAVMR. The segment at 446 to 512 is disordered; the sequence is RDKPTNNFPK…GPTSRRPKSH (67 aa). Positions 450 to 476 are enriched in polar residues; that stretch reads TNNFPKNQTPVRMRRNSFTPLSSSNTI. Residue Ser-466 is modified to Phosphoserine; by AMPK and PKA. Thr-468 is subject to Phosphothreonine. Thr-475 is modified (phosphothreonine; by PKC). Phosphoserine is present on residues Ser-483 and Ser-493.

This sequence in the C-terminal section; belongs to the phosphoglycerate mutase family. Homodimer. Forms a heterodimer with PFKFB3. In terms of processing, phosphorylation by AMPK stimulates activity.

It carries out the reaction beta-D-fructose 2,6-bisphosphate + H2O = beta-D-fructose 6-phosphate + phosphate. The enzyme catalyses beta-D-fructose 6-phosphate + ATP = beta-D-fructose 2,6-bisphosphate + ADP + H(+). With respect to regulation, phosphorylation results in the activation of the kinase activity. Synthesis and degradation of fructose 2,6-bisphosphate. In Pongo abelii (Sumatran orangutan), this protein is 6-phosphofructo-2-kinase/fructose-2,6-bisphosphatase 2 (PFKFB2).